Here is a 312-residue protein sequence, read N- to C-terminus: Olfactory receptor 6C1 (312 aa).

Topologically, residues 1–23 (MRNHTEITEFILLGLTDDPNFQV) are extracellular. Residue asparagine 3 is glycosylated (N-linked (GlcNAc...) asparagine). A helical membrane pass occupies residues 24–44 (VIFVFLLITYMLSITGNLTLI). Residues 45–52 (TITLLDSH) are Cytoplasmic-facing. A helical membrane pass occupies residues 53 to 73 (LQTPMYFFLRNFSILEISFTT). The Extracellular portion of the chain corresponds to 74 to 97 (VSIPKFLGNIISGDKTISFNNCIV). A disulfide bridge links cysteine 95 with cysteine 187. A helical membrane pass occupies residues 98–118 (QLFFFILLGVTEFYLLAAMSY). Residues 119–137 (DRYVAICKPLHCLSIMNRR) are Cytoplasmic-facing. Residues 138–158 (VCTLLVFTSWLVSFLIIFPAL) form a helical membrane-spanning segment. At 159–195 (MLLLKLHYCRSNIIDHFTCDYFPLLQLACSDTKFLEV) the chain is on the extracellular side. The chain crosses the membrane as a helical span at residues 196–215 (MGFSCAAFTLMFTLALIFLS). At 216–235 (YIYIIRTILRIPSTSQRTKA) the chain is on the cytoplasmic side. A helical membrane pass occupies residues 236 to 256 (FSTCSSHMVVVSISYGSCIFM). Over 257 to 269 (YIKPSAKDRVSLS) the chain is Extracellular. A helical transmembrane segment spans residues 270 to 290 (KGVAILNTSVAPMMNPFIYSL). The Cytoplasmic portion of the chain corresponds to 291–312 (RNQQVKQAFINMARKTVFFTST).

Belongs to the G-protein coupled receptor 1 family.

It localises to the cell membrane. Its function is as follows. Odorant receptor. The sequence is that of Olfactory receptor 6C1 (OR6C1) from Homo sapiens (Human).